Consider the following 513-residue polypeptide: MGNSFGCSASGERLVSAARDGDFVEAKMLLDCNPCLAKYSTFGGLNSPLHFAAAKGHNEIVGLLLENGADVNSRNYCGQTALMQACRYGHWEVVQTLLLFRCNVTRADYLAGRTALHFAAVNGHARCIRLVLADFLPSDKLNSLPETGVVTAKNKSEQSALSKFVNKAADGGITALHMAALNGLFDCVQLLLDLEANVSAVTFHYGTSMDMIGAGSTPLHYAACGGNLKCCQILLARGARKMTLNCNGWLPIDIARMWSRHWLEPLLSPNSDVVIPAFPHSNYLSLPLLSILNIAREFGLQSATIGDEVDICAVCLERTCTVAAEGCEHQLCVRCALYLCSSSNVPSVTVGPPGSIPCPLCRHGITAFKRLPSSLTREMKLPMSLGFCAPCMLHTGDTTDQSSPTCPPTEQRSSKTRAASVSSDIFCPVTCSPFPSVNIPMCTCNEGTCPNFETHGTERHSEEHVESSPSRTTTEQEKIEEGQRLGKTTTCSSMFWGRRSCSRENQCNSEINA.

ANK repeat units lie at residues 44–73, 77–106, 111–140, 171–200, and 214–244; these read GLNS…DVNS, CGQT…NVTR, AGRT…PSDK, GGIT…NVSA, and AGST…KMTL. An RING-type zinc finger spans residues 312-362; that stretch reads CAVCLERTCTVAAEGCEHQLCVRCALYLCSSSNVPSVTVGPPGSIPCPLCR. Disordered stretches follow at residues 397–417 and 455–483; these read DTTD…SKTR and HGTE…EEGQ. Basic and acidic residues-rich tracts occupy residues 455-466 and 474-483; these read HGTERHSEEHVE and TEQEKIEEGQ.

It catalyses the reaction S-ubiquitinyl-[E2 ubiquitin-conjugating enzyme]-L-cysteine + [acceptor protein]-L-lysine = [E2 ubiquitin-conjugating enzyme]-L-cysteine + N(6)-ubiquitinyl-[acceptor protein]-L-lysine.. The protein operates within protein modification; protein ubiquitination. Functionally, possesses E3 ubiquitin-protein ligase activity when associated with the E2 enzyme UBC8 in vitro. This Arabidopsis thaliana (Mouse-ear cress) protein is E3 ubiquitin-protein ligase XBAT33 (XBAT33).